The primary structure comprises 182 residues: MGLRPAKIDRDVDKPAYTRREYIRGAPGPKITIFDMGNLSAEFEYEVSLHAEQAMQIRQNALEAIRIQVNRYLQKNVGRSNYHFKIRVYPFQVLRENPMATGRKADRYGNGMRRPFGKPIGLAARVKKDQKILTVWVNEQHLKFALGAMHRAKMKLPYSAYYRIYDREGNDVTTKVLSTMKR.

It belongs to the universal ribosomal protein uL16 family.

This chain is Large ribosomal subunit protein uL16, found in Thermococcus gammatolerans (strain DSM 15229 / JCM 11827 / EJ3).